A 482-amino-acid polypeptide reads, in one-letter code: MTTITTAAIIGAGLAGCECALRLARAGVRVTLFEMKPAAFSPAHSNPDLGELVCSNSLRSDDIASGVGLLKQEMRELGSIVMEAADATRVPAGKALAVDRDLFARHITAVIEAEPGITLERREVASLDDPALASADVVVVAAGPLASAGLSDSLAAMVGGQLYFYDAIAPIIAAESIDLSIAFSGSRYGEPGEEGDYLNCPMNRDEYDAFYEALLAAEKVPSRDFEKELHFEGCMPIEALAERGPRTLVFGPFKPVGFTDPRTGTRPYAIIQLRAENRNKTAFNIVGCQTKLKYAEQERVFRMIPGLAGAEFVRHGSVHRNTYVNAPRVLADDLSLRADKRVFLAGQITGVEGYVESAACGMWLGMVLAARIQGRELPTPPPQTALGALLMHLRTPVKNFQPSNANFGLMPELGLKVKKRERKPLYSARAREHFVRWLAEAGVTPVIEPLLPTAPDAADATGAIDTTGATGAAREETAPTEA.

FAD is bound at residue 11-16 (GAGLAG).

This sequence belongs to the MnmG family. TrmFO subfamily. FAD serves as cofactor.

It localises to the cytoplasm. It carries out the reaction uridine(54) in tRNA + (6R)-5,10-methylene-5,6,7,8-tetrahydrofolate + NADH + H(+) = 5-methyluridine(54) in tRNA + (6S)-5,6,7,8-tetrahydrofolate + NAD(+). It catalyses the reaction uridine(54) in tRNA + (6R)-5,10-methylene-5,6,7,8-tetrahydrofolate + NADPH + H(+) = 5-methyluridine(54) in tRNA + (6S)-5,6,7,8-tetrahydrofolate + NADP(+). Functionally, catalyzes the folate-dependent formation of 5-methyl-uridine at position 54 (M-5-U54) in all tRNAs. This chain is Methylenetetrahydrofolate--tRNA-(uracil-5-)-methyltransferase TrmFO, found in Nitratidesulfovibrio vulgaris (strain DP4) (Desulfovibrio vulgaris).